The chain runs to 353 residues: Fasciclin-like arabinogalactan protein 21 (353 aa).

Positions 1–28 are cleaved as a signal peptide; sequence MGCCSSDCFVYFILSIALAFMAISTTLR. N-linked (GlcNAc...) asparagine glycosylation is found at Asn-51, Asn-81, Asn-94, Asn-200, Asn-249, and Asn-315. Residues 83 to 181 form the FAS1 1 domain; sequence TLFAIEDASF…HGVIGPFSPL (99 aa). The region spanning 254-352 is the FAS1 2 domain; the sequence is TILATPNLVS…GISHTLEIPH (99 aa).

Belongs to the fasciclin-like AGP family.

It localises to the secreted. Its function is as follows. May be a cell surface adhesion protein. The protein is Fasciclin-like arabinogalactan protein 21 (FLA21) of Arabidopsis thaliana (Mouse-ear cress).